Reading from the N-terminus, the 177-residue chain is Large ribosomal subunit protein uL6 (177 aa).

This sequence belongs to the universal ribosomal protein uL6 family. Part of the 50S ribosomal subunit.

Its function is as follows. This protein binds to the 23S rRNA, and is important in its secondary structure. It is located near the subunit interface in the base of the L7/L12 stalk, and near the tRNA binding site of the peptidyltransferase center. This chain is Large ribosomal subunit protein uL6, found in Azorhizobium caulinodans (strain ATCC 43989 / DSM 5975 / JCM 20966 / LMG 6465 / NBRC 14845 / NCIMB 13405 / ORS 571).